The chain runs to 230 residues: Ribonuclease 3 (230 aa).

The region spanning 5-125 (YSRFYNILGY…VIGAIYLDSD (121 aa)) is the RNase III domain. Glu40 serves as a coordination point for Mg(2+). Asp44 is an active-site residue. Mg(2+) contacts are provided by Asp111 and Glu114. Glu114 is a catalytic residue. The DRBM domain maps to 153–223 (DSKSKLQEIL…AEKMIEMLSQ (71 aa)).

This sequence belongs to the ribonuclease III family. As to quaternary structure, homodimer. The cofactor is Mg(2+).

The protein localises to the cytoplasm. It carries out the reaction Endonucleolytic cleavage to 5'-phosphomonoester.. Its function is as follows. Digests double-stranded RNA. Involved in the processing of primary rRNA transcript to yield the immediate precursors to the large and small rRNAs (23S and 16S). Processes some mRNAs, and tRNAs when they are encoded in the rRNA operon. Processes pre-crRNA and tracrRNA of type II CRISPR loci if present in the organism. This chain is Ribonuclease 3, found in Francisella tularensis subsp. holarctica (strain OSU18).